Reading from the N-terminus, the 333-residue chain is Beta-ketoacyl-[acyl-carrier-protein] synthase III (333 aa).

Active-site residues include C114 and H255. Positions 256 to 260 are ACP-binding; sequence QANYR. N285 is an active-site residue.

This sequence belongs to the thiolase-like superfamily. FabH family. Homodimer.

Its subcellular location is the cytoplasm. It catalyses the reaction malonyl-[ACP] + acetyl-CoA + H(+) = 3-oxobutanoyl-[ACP] + CO2 + CoA. The protein operates within lipid metabolism; fatty acid biosynthesis. Its function is as follows. Catalyzes the condensation reaction of fatty acid synthesis by the addition to an acyl acceptor of two carbons from malonyl-ACP. Catalyzes the first condensation reaction which initiates fatty acid synthesis and may therefore play a role in governing the total rate of fatty acid production. Possesses both acetoacetyl-ACP synthase and acetyl transacylase activities. Its substrate specificity determines the biosynthesis of branched-chain and/or straight-chain of fatty acids. This chain is Beta-ketoacyl-[acyl-carrier-protein] synthase III, found in Aliarcobacter butzleri (strain RM4018) (Arcobacter butzleri).